A 61-amino-acid polypeptide reads, in one-letter code: Large ribosomal subunit protein uL30 (61 aa).

Belongs to the universal ribosomal protein uL30 family. Part of the 50S ribosomal subunit.

In Clostridioides difficile (strain 630) (Peptoclostridium difficile), this protein is Large ribosomal subunit protein uL30.